Consider the following 399-residue polypeptide: Carbamoyl phosphate synthase small chain (399 aa).

Residues 1–209 (MEKFKLLKLG…SAINKKLHTS (209 aa)) are CPSase. L-glutamine is bound by residues Ser-55, Gly-261, and Gly-263. Residues 213–399 (RIIVLDLGVK…VYIIYKSKSS (187 aa)) form the Glutamine amidotransferase type-1 domain. Catalysis depends on Cys-289, which acts as the Nucleophile. L-glutamine contacts are provided by Leu-290, Gln-293, Asn-329, Gly-331, and Phe-332. Catalysis depends on residues His-372 and Glu-374.

Belongs to the CarA family. In terms of assembly, composed of two chains; the small (or glutamine) chain promotes the hydrolysis of glutamine to ammonia, which is used by the large (or ammonia) chain to synthesize carbamoyl phosphate. Tetramer of heterodimers (alpha,beta)4.

Its subcellular location is the plastid. It is found in the chloroplast. The enzyme catalyses hydrogencarbonate + L-glutamine + 2 ATP + H2O = carbamoyl phosphate + L-glutamate + 2 ADP + phosphate + 2 H(+). It carries out the reaction L-glutamine + H2O = L-glutamate + NH4(+). It participates in amino-acid biosynthesis; L-arginine biosynthesis; carbamoyl phosphate from bicarbonate: step 1/1. Its pathway is pyrimidine metabolism; UMP biosynthesis via de novo pathway; (S)-dihydroorotate from bicarbonate: step 1/3. Functionally, small subunit of the glutamine-dependent carbamoyl phosphate synthetase (CPSase). CPSase catalyzes the formation of carbamoyl phosphate from the ammonia moiety of glutamine, carbonate, and phosphate donated by ATP, constituting the first step of 2 biosynthetic pathways, one leading to arginine and/or urea and the other to pyrimidine nucleotides. The small subunit (glutamine amidotransferase) binds and cleaves glutamine to supply the large subunit with the substrate ammonia. This is Carbamoyl phosphate synthase small chain from Cyanidium caldarium (Red alga).